The following is a 542-amino-acid chain: Sodium/hydrogen exchanger 8 (542 aa).

Transmembrane regions (helical) follow at residues 55–75 (EQSS…CIIL), 79–99 (LIRY…LGIL), 118–138 (EEMF…IFES), 151–171 (IGSI…VVGG), 186–206 (NMTD…VATI), 256–276 (TFLQ…ALGT), 306–326 (AYLP…VFAF), 349–369 (LVLF…NFFR), 374–394 (TPKM…PYAL), 412–432 (TTIV…MPLI), and 446–466 (NKKD…ESEH). T471 is subject to Phosphothreonine. Phosphoserine occurs at positions 532 and 534.

It belongs to the monovalent cation:proton antiporter 1 (CPA1) transporter (TC 2.A.36) family.

The protein localises to the golgi apparatus membrane. It is found in the golgi apparatus. The protein resides in the trans-Golgi network membrane. It localises to the endosome. Its subcellular location is the multivesicular body membrane. The protein localises to the apical cell membrane. It is found in the cytoplasmic vesicle. The protein resides in the secretory vesicle. It localises to the acrosome. It catalyses the reaction Na(+)(in) + H(+)(out) = Na(+)(out) + H(+)(in). Functionally, na(+)/H(+) antiporter. Mediates the electoneutral exchange of intracellular H(+) ions for extracellular Na(+) in 1:1 stoichiometry. Acts as an Na(+)/H(+) exchanger in the trans-Golgi. Contributes to the regulation of pH regulation of Golgi apparatus, and consequently, in protein trafficking and endosomal morphology. In germ cells, plays a crucial role in acrosome biogenesis and sperm development, probably by playing a role in the fusion of the Golgi-derived vesicles that form the acrosomal cap. Can also be active at the cell surface of specialized cells. In the small intestine, at the cell membrane, plays a major physiological role in transepithelial absorption of Na(+) and regulates intracellular pH homeostasis of intestinal epithelial cells. Acts as an important regulator of mucosal integrity in the intestine and in the stomach, could mediate the pH fluctuation necessary for mucin exocytosis or assist membrane trafficking of other proteins. Plays a role in photoreceptor survival and in the maintenance of intracellular pH homeostasis in retinal pigment epithelium (RPE cells). This Macaca fascicularis (Crab-eating macaque) protein is Sodium/hydrogen exchanger 8 (SLC9A8).